The primary structure comprises 389 residues: Chalcone synthase H2 (389 aa).

C164 is an active-site residue.

The protein belongs to the thiolase-like superfamily. Chalcone/stilbene synthases family.

It is found in the cytoplasm. The catalysed reaction is (E)-4-coumaroyl-CoA + 3 malonyl-CoA + 3 H(+) = 2',4,4',6'-tetrahydroxychalcone + 3 CO2 + 4 CoA. It participates in secondary metabolite biosynthesis; flavonoid biosynthesis. Its function is as follows. Involved in the biosynthesis of prenylated phenolics natural products which contribute to the bitter taste of beer and display broad biological activities. Chalcone synthase that can use 4-coumaroyl-CoA to produce 4,2',4',6'-tetrahydroxychalcone (also termed naringenin-chalcone or chalcone) which can, under specific conditions, spontaneously isomerize into naringenin. This Humulus lupulus (European hop) protein is Chalcone synthase H2.